We begin with the raw amino-acid sequence, 219 residues long: Ran-binding protein 1 homolog c (219 aa).

Positions 1 to 11 are enriched in basic and acidic residues; that stretch reads MASTEPERENR. Disordered regions lie at residues 1-30 and 160-219; these read MASTEPERENREDETEVNEDEDTGAQVAPI and QVGK…EAST. Over residues 12–23 the composition is skewed to acidic residues; the sequence is EDETEVNEDEDT. The 136-residue stretch at 26–161 folds into the RanBD1 domain; that stretch reads QVAPIVRLEE…FTEIAESQQV (136 aa). The segment covering 185–219 has biased composition (basic and acidic residues); sequence SEEKAKEAEEKEPAKEDKETKKEKVEEEKKTEAST.

The protein resides in the nucleus. It localises to the nuclear pore complex. This chain is Ran-binding protein 1 homolog c (RANBP1C), found in Arabidopsis thaliana (Mouse-ear cress).